Here is a 519-residue protein sequence, read N- to C-terminus: Fatty acid--[acyl-carrier-protein] ligase ScoC (519 aa).

T167 is a binding site for Mg(2+). The ATP site is built by I216 and T312. Residue E313 coordinates Mg(2+). ATP-binding residues include D394 and K411.

It belongs to the ATP-dependent AMP-binding enzyme family. The cofactor is Mg(2+).

The catalysed reaction is a medium-chain fatty acid + holo-[ACP] + ATP = a medium-chain fatty acyl-[ACP] + AMP + diphosphate. It carries out the reaction a medium-chain fatty acid + ATP + H(+) = a medium-chain fatty acyl-AMP + diphosphate. It catalyses the reaction a medium-chain fatty acyl-AMP + holo-[ACP] = a medium-chain fatty acyl-[ACP] + AMP + H(+). The enzyme catalyses octanoate + holo-[ACP] + ATP = octanoyl-[ACP] + AMP + diphosphate. The catalysed reaction is octanoate + ATP + H(+) = octanoyl-AMP + diphosphate. It carries out the reaction octanoyl-AMP + holo-[ACP] = octanoyl-[ACP] + AMP + H(+). It catalyses the reaction a (2E)-enoyl fatty acid + holo-[ACP] + ATP = a (2E)-enoyl-[ACP] + AMP + diphosphate. The enzyme catalyses a (2E)-enoyl fatty acid + ATP + H(+) = a (2E)-2-fatty-enoyl-AMP + diphosphate. The catalysed reaction is a (2E)-2-fatty-enoyl-AMP + holo-[ACP] = a (2E)-enoyl-[ACP] + AMP + H(+). It carries out the reaction (2E)-2-butenoate + holo-[ACP] + ATP = (2E)-butenoyl-[ACP] + AMP + diphosphate. It catalyses the reaction (2E)-2-butenoate + ATP + H(+) = (2E)-but-2-enoyl-AMP + diphosphate. The enzyme catalyses (2E)-but-2-enoyl-AMP + holo-[ACP] = (2E)-butenoyl-[ACP] + AMP + H(+). The catalysed reaction is a (3R)-3-isocyanyl-fatty acid + holo-[ACP] + ATP = a (3R)-3-isocyanyl-fatty acyl-[ACP] + AMP + diphosphate. It carries out the reaction a (3R)-3-isocyanyl-fatty acid + ATP + H(+) = a (3R)-3-isocyanyl-fatty acyl-AMP + diphosphate. It catalyses the reaction a (3R)-3-isocyanyl-fatty acyl-AMP + holo-[ACP] = a (3R)-3-isocyanyl-fatty acyl-[ACP] + AMP + H(+). The enzyme catalyses (3R)-3-isocyanylbutanoate + holo-[ACP] + ATP = (3R)-3-isocyanylbutanoyl-[ACP] + AMP + diphosphate. The catalysed reaction is (3R)-3-isocyanylbutanoate + ATP + H(+) = (3R)-3-isocyanylbutanoyl-AMP + diphosphate. It carries out the reaction (3R)-3-isocyanylbutanoyl-AMP + holo-[ACP] = (3R)-3-isocyanylbutanoyl-[ACP] + AMP + H(+). Acyl:acyl-carrier protein ligase involved in the biosynthesis of a unique class of isonitrile lipopeptides (INLPs). Shows a strong preference for fatty acids with a short/medium-chain length (C4-C8) in vitro, and accepts alpha,beta-unsaturated fatty acids such as crotonate, which seems to be a physiological substrate. Acts twice during the INLP pathway, catalyzing the activation of crotonate ((2E)-2-butenoate) as well as (3R)-3-isocyanylbutanoate as acyl-adenylates (acyl-AMP), and then the acyl transfer to the dedicated acyl-carrier protein ScoB. The chain is Fatty acid--[acyl-carrier-protein] ligase ScoC from Streptomyces coeruleorubidus.